The primary structure comprises 201 residues: Probable nicotinate-nucleotide adenylyltransferase (201 aa).

It belongs to the NadD family.

It catalyses the reaction nicotinate beta-D-ribonucleotide + ATP + H(+) = deamido-NAD(+) + diphosphate. It functions in the pathway cofactor biosynthesis; NAD(+) biosynthesis; deamido-NAD(+) from nicotinate D-ribonucleotide: step 1/1. Functionally, catalyzes the reversible adenylation of nicotinate mononucleotide (NaMN) to nicotinic acid adenine dinucleotide (NaAD). The sequence is that of Probable nicotinate-nucleotide adenylyltransferase from Clostridium botulinum (strain ATCC 19397 / Type A).